Here is a 231-residue protein sequence, read N- to C-terminus: NADH-ubiquinone oxidoreductase chain 4 (231 aa).

The next 6 membrane-spanning stretches (helical) occupy residues 1–21, 34–54, 63–85, 89–111, 128–148, and 169–189; these read PIAG…YGII, MFLP…LTCL, IAYS…TPWG, ALAL…NTTY, ILPM…AIPP, and TIIM…HMFL.

It belongs to the complex I subunit 4 family.

The protein localises to the mitochondrion membrane. It carries out the reaction a ubiquinone + NADH + 5 H(+)(in) = a ubiquinol + NAD(+) + 4 H(+)(out). Its function is as follows. Core subunit of the mitochondrial membrane respiratory chain NADH dehydrogenase (Complex I) that is believed to belong to the minimal assembly required for catalysis. Complex I functions in the transfer of electrons from NADH to the respiratory chain. The immediate electron acceptor for the enzyme is believed to be ubiquinone. The sequence is that of NADH-ubiquinone oxidoreductase chain 4 (MT-ND4) from Bothrocophias hyoprora (Amazonian hognose viper).